A 301-amino-acid polypeptide reads, in one-letter code: tRNA-cytidine(32) 2-sulfurtransferase (301 aa).

Positions Ser-55 to Ser-60 match the PP-loop motif motif. Positions 130, 133, and 221 each coordinate [4Fe-4S] cluster.

This sequence belongs to the TtcA family. Homodimer. The cofactor is Mg(2+). [4Fe-4S] cluster is required as a cofactor.

It is found in the cytoplasm. It carries out the reaction cytidine(32) in tRNA + S-sulfanyl-L-cysteinyl-[cysteine desulfurase] + AH2 + ATP = 2-thiocytidine(32) in tRNA + L-cysteinyl-[cysteine desulfurase] + A + AMP + diphosphate + H(+). Its pathway is tRNA modification. Its function is as follows. Catalyzes the ATP-dependent 2-thiolation of cytidine in position 32 of tRNA, to form 2-thiocytidine (s(2)C32). The sulfur atoms are provided by the cysteine/cysteine desulfurase (IscS) system. This Acinetobacter baumannii (strain SDF) protein is tRNA-cytidine(32) 2-sulfurtransferase.